The sequence spans 633 residues: Leucine-rich repeat and IQ domain-containing protein 3 (633 aa).

LRR repeat units follow at residues 51–72, 73–94, and 98–119; these read SLRV…QGCK, KLIK…TFWN, and NLKL…CVLS. The region spanning 132–179 is the LRRCT domain; that stretch reads CPVSLKKGYRHVLVNSIWPLKALDHHVISDEEIIQNWHLPERFKTFSQ. In terms of domain architecture, IQ spans 215-244; it reads HNSPVLIIQRWIRGFIVRKHLSPYFTRKRH. The tract at residues 322–343 is disordered; sequence NSKQPRHHIQKGQNEMKSDSED. A coiled-coil region spans residues 556-616; it reads EKREKRKYKQ…AKVEFINTYY (61 aa).

The chain is Leucine-rich repeat and IQ domain-containing protein 3 (Lrriq3) from Rattus norvegicus (Rat).